Reading from the N-terminus, the 800-residue chain is DNA topoisomerase 4 subunit A (800 aa).

The region spanning 31-495 (LPDVRDGLKP…EIEEIKIDKE (465 aa)) is the Topo IIA-type catalytic domain. The O-(5'-phospho-DNA)-tyrosine intermediate role is filled by Y119.

This sequence belongs to the type II topoisomerase GyrA/ParC subunit family. ParC type 2 subfamily. As to quaternary structure, heterotetramer composed of ParC and ParE.

It is found in the cell membrane. It carries out the reaction ATP-dependent breakage, passage and rejoining of double-stranded DNA.. Its function is as follows. Topoisomerase IV is essential for chromosome segregation. It relaxes supercoiled DNA. Performs the decatenation events required during the replication of a circular DNA molecule. The polypeptide is DNA topoisomerase 4 subunit A (Staphylococcus aureus (strain Mu50 / ATCC 700699)).